The following is a 345-amino-acid chain: Uroporphyrinogen decarboxylase (345 aa).

Substrate is bound by residues Arg-28–Arg-32, Asp-77, Tyr-153, Ser-208, and His-322.

Belongs to the uroporphyrinogen decarboxylase family. As to quaternary structure, homodimer.

It localises to the cytoplasm. It carries out the reaction uroporphyrinogen III + 4 H(+) = coproporphyrinogen III + 4 CO2. It functions in the pathway porphyrin-containing compound metabolism; protoporphyrin-IX biosynthesis; coproporphyrinogen-III from 5-aminolevulinate: step 4/4. In terms of biological role, catalyzes the decarboxylation of four acetate groups of uroporphyrinogen-III to yield coproporphyrinogen-III. The sequence is that of Uroporphyrinogen decarboxylase from Solibacter usitatus (strain Ellin6076).